Here is an 893-residue protein sequence, read N- to C-terminus: MRTADIAKRYLDYFAKHDHLIVPSASLISPNPTTLFTIAGMVPFIPYLMGEQTPPKRRMASNQKCVRTLDIDEVGKTTRHGTFFQMLGNFSFGDYFKEEAIHYAWELLTTSQDEGGYGFDPEKLWMTTFTDDDEARSMWINEGVDPEHIQKMGMEDNFWTTGGPGPGGPCSEIYVDRGPAFGKEGGPIADENRYIEIWDLVFENYEVDNVKSKTDLHIVGELENKNIDTGAGLERLAYLLQGKNNIYETDEVFPVIEAAEQLSGLKYGENEDADVRFRVVADHVRSALMIMSDGVRPSNVGRGYVLRRLLRRTVRSMRMLGVTDPVLPTLFPTSKAAMEASYPELNDTFHEVSESAYGEEDAFRRTLETGTTILDVAVNKAKSDSAEPVVAGEDAFKLHDTYGFPIELTLEMAAEQGVKVDEAKFRELMAEQKSRARADALKKRHNVDLSVYDDFKKTLVSPIDFLGYTDMSARAKVIGIMQEGKGSVPAVTGPANVEVILDRTPFYAEAGGQLADQGEILSDDGAVLEVDDVQKPIKDLIVHQCRLTEGTLVVGAEVNANIDLARRGAIARSHTATHMVHKALREELGPQATQRGSEDAPNRLRFDFQWSKAPAKSVISAVEERVNDKLRDNLAVTTKEMKFDDAIALGAMHLFGEKYGDIVRVVSIGEDGWSRELCGGTHVDHVGKIGMVNILSEASIGSGVRRVDAVVGQGAYDFNAREHALVSQLSDKLNARPDELAERVNALLAKLKESDRRLASMYESQLAASVPALVADTKNSAAPVKVAVKNVGHFGAVDALRKTVLDVRAQLGEDAPVVVALAGVNEDDKPMVAVATNEAARKAGIKAGDLVRGAAKVLGGGGGGKPDFAQGGGVDASKIDEALEALKHEAQKA.

4 residues coordinate Zn(2+): His574, His578, Cys678, and His682.

This sequence belongs to the class-II aminoacyl-tRNA synthetase family. Requires Zn(2+) as cofactor.

It localises to the cytoplasm. It catalyses the reaction tRNA(Ala) + L-alanine + ATP = L-alanyl-tRNA(Ala) + AMP + diphosphate. In terms of biological role, catalyzes the attachment of alanine to tRNA(Ala) in a two-step reaction: alanine is first activated by ATP to form Ala-AMP and then transferred to the acceptor end of tRNA(Ala). Also edits incorrectly charged Ser-tRNA(Ala) and Gly-tRNA(Ala) via its editing domain. This Bifidobacterium longum (strain NCC 2705) protein is Alanine--tRNA ligase.